Consider the following 254-residue polypeptide: RxLR effector protein CRE5 (254 aa).

The signal sequence occupies residues 1–19 (MQTIQLIIFVAFVLSRAAA). N-linked (GlcNAc...) asparagine glycosylation occurs at N49. Positions 53-63 (RSLRQHEGEDR) match the RxLR-dEER motif. The 64-residue stretch at 191–254 (SRWLSAGVVT…MEEGGVCRAL (64 aa)) folds into the Nudix hydrolase domain. The Nudix box signature appears at 228 to 249 (GGWDRGEKIKKAALREVMEEGG).

In the N-terminal section; belongs to the RxLR effector family. This sequence in the C-terminal section; belongs to the Nudix hydrolase family.

It is found in the secreted. The protein resides in the host cytoplasm. The protein localises to the host nucleus. Its subcellular location is the host nucleolus. Functionally, effector that is involved in host plant infection. Contributes to virulence during the early infection stage, by inhibiting plant defense responses induced by both PAMP-triggered immunity (PTI) and effector-triggered immunity (ETI). In Phytophthora infestans (strain T30-4) (Potato late blight agent), this protein is RxLR effector protein CRE5.